A 106-amino-acid polypeptide reads, in one-letter code: Transcription initiation factor IIA subunit 2 (106 aa).

The protein belongs to the TFIIA subunit 2 family. As to quaternary structure, TFIIA is a heterodimer of the large unprocessed subunit 1 and a small subunit gamma. It was originally believed to be a heterotrimer of an alpha, a beta and a gamma subunit.

Its subcellular location is the nucleus. Its function is as follows. TFIIA is a component of the transcription machinery of RNA polymerase II and plays an important role in transcriptional activation. TFIIA in a complex with TBP mediates transcriptional activity. Protein involved in the resistance to X.oryzae. The polypeptide is Transcription initiation factor IIA subunit 2 (TFIIAy) (Oryza sativa subsp. indica (Rice)).